The following is a 239-amino-acid chain: Fumarate reductase iron-sulfur subunit (239 aa).

Residues 5-95 (LTIRVFKYDP…DGVITLLPLP (91 aa)) enclose the 2Fe-2S ferredoxin-type domain. 4 residues coordinate [2Fe-2S] cluster: Cys-57, Cys-62, Cys-65, and Cys-77. Residues 142–171 (AQEVFELDRCIECGCCIAACGTKIMREDFV) enclose the 4Fe-4S ferredoxin-type domain. [4Fe-4S] cluster contacts are provided by Cys-151, Cys-154, and Cys-157. [3Fe-4S] cluster contacts are provided by Cys-161, Cys-208, and Cys-214. Position 218 (Cys-218) interacts with [4Fe-4S] cluster.

The protein belongs to the succinate dehydrogenase/fumarate reductase iron-sulfur protein family. As to quaternary structure, part of an enzyme complex containing three subunits: a flavoprotein (frdA), an iron-sulfur protein (frdB), and diheme cytochrome b (frdC). [2Fe-2S] cluster serves as cofactor. Requires [3Fe-4S] cluster as cofactor. [4Fe-4S] cluster is required as a cofactor.

The protein localises to the cell inner membrane. The enzyme catalyses a menaquinone + succinate = a menaquinol + fumarate. In terms of biological role, the fumarate reductase enzyme complex is required for fumarate respiration using formate or sulfide as electron donor. The polypeptide is Fumarate reductase iron-sulfur subunit (frdB) (Wolinella succinogenes (strain ATCC 29543 / DSM 1740 / CCUG 13145 / JCM 31913 / LMG 7466 / NCTC 11488 / FDC 602W) (Vibrio succinogenes)).